Reading from the N-terminus, the 450-residue chain is tRNA-2-methylthio-N(6)-dimethylallyladenosine synthase (450 aa).

In terms of domain architecture, MTTase N-terminal spans 14-132 (GEFFIETWGC…FPNYLNEVKK (119 aa)). [4Fe-4S] cluster contacts are provided by Cys-23, Cys-59, Cys-93, Cys-169, Cys-173, and Cys-176. The 231-residue stretch at 155–385 (RKNSMKAFVT…VEVVNEISAK (231 aa)) folds into the Radical SAM core domain. Positions 388 to 450 (KAYEGKIEEV…NSFSLTGEEI (63 aa)) constitute a TRAM domain.

It belongs to the methylthiotransferase family. MiaB subfamily. As to quaternary structure, monomer. It depends on [4Fe-4S] cluster as a cofactor.

It is found in the cytoplasm. The catalysed reaction is N(6)-dimethylallyladenosine(37) in tRNA + (sulfur carrier)-SH + AH2 + 2 S-adenosyl-L-methionine = 2-methylsulfanyl-N(6)-dimethylallyladenosine(37) in tRNA + (sulfur carrier)-H + 5'-deoxyadenosine + L-methionine + A + S-adenosyl-L-homocysteine + 2 H(+). Its function is as follows. Catalyzes the methylthiolation of N6-(dimethylallyl)adenosine (i(6)A), leading to the formation of 2-methylthio-N6-(dimethylallyl)adenosine (ms(2)i(6)A) at position 37 in tRNAs that read codons beginning with uridine. The polypeptide is tRNA-2-methylthio-N(6)-dimethylallyladenosine synthase (Clostridium botulinum (strain Langeland / NCTC 10281 / Type F)).